The sequence spans 131 residues: Ribonuclease P protein component (131 aa).

The protein belongs to the RnpA family. Consists of a catalytic RNA component (M1 or rnpB) and a protein subunit.

The catalysed reaction is Endonucleolytic cleavage of RNA, removing 5'-extranucleotides from tRNA precursor.. Functionally, RNaseP catalyzes the removal of the 5'-leader sequence from pre-tRNA to produce the mature 5'-terminus. It can also cleave other RNA substrates such as 4.5S RNA. The protein component plays an auxiliary but essential role in vivo by binding to the 5'-leader sequence and broadening the substrate specificity of the ribozyme. The polypeptide is Ribonuclease P protein component (Stutzerimonas stutzeri (strain A1501) (Pseudomonas stutzeri)).